Reading from the N-terminus, the 260-residue chain is Thiazole synthase (260 aa).

The active-site Schiff-base intermediate with DXP is Lys-101. 1-deoxy-D-xylulose 5-phosphate contacts are provided by residues Gly-162, 188 to 189 (AG), and 210 to 211 (NT).

Belongs to the ThiG family. In terms of assembly, homotetramer. Forms heterodimers with either ThiH or ThiS.

It localises to the cytoplasm. It catalyses the reaction [ThiS sulfur-carrier protein]-C-terminal-Gly-aminoethanethioate + 2-iminoacetate + 1-deoxy-D-xylulose 5-phosphate = [ThiS sulfur-carrier protein]-C-terminal Gly-Gly + 2-[(2R,5Z)-2-carboxy-4-methylthiazol-5(2H)-ylidene]ethyl phosphate + 2 H2O + H(+). It participates in cofactor biosynthesis; thiamine diphosphate biosynthesis. Catalyzes the rearrangement of 1-deoxy-D-xylulose 5-phosphate (DXP) to produce the thiazole phosphate moiety of thiamine. Sulfur is provided by the thiocarboxylate moiety of the carrier protein ThiS. In vitro, sulfur can be provided by H(2)S. This Acidithiobacillus ferrooxidans (strain ATCC 23270 / DSM 14882 / CIP 104768 / NCIMB 8455) (Ferrobacillus ferrooxidans (strain ATCC 23270)) protein is Thiazole synthase.